A 1191-amino-acid chain; its full sequence is Phosphatidylinositol 3,4,5-trisphosphate 5-phosphatase 1 (1191 aa).

Residues 8–104 enclose the SH2 domain; sequence WNHGNITRSK…GLVTHLQYPV (97 aa). The tract at residues 122 to 148 is disordered; it reads SVMSPPELPPRNIPMSAGPSEAKDLPL. The SH3-binding 1 signature appears at 127-132; that stretch reads PELPPR. Phosphoserine is present on serine 246. An NPXY motif 1 motif is present at residues 915–918; the sequence is NPNY. Tyrosine 918 carries the phosphotyrosine modification. The residue at position 935 (serine 935) is a Phosphoserine. Position 945 is a phosphotyrosine (tyrosine 945). Disordered regions lie at residues 947–994 and 1021–1191; these read QLPK…EARP and YGSV…TAMQ. Positions 962-972 are enriched in pro residues; sequence PPTPPSQPPLS. Threonine 964 carries the phosphothreonine modification. A phosphoserine mark is found at serine 967 and serine 972. Positions 970–975 match the SH3-binding 2 motif; sequence PLSPKK. Positions 1015-1029 are interaction with DAB2; sequence MFENPLYGSVSSFPK. The NPXY motif 2 motif lies at 1018 to 1021; the sequence is NPLY. Residue tyrosine 1021 is modified to Phosphotyrosine. Over residues 1032–1046 the composition is skewed to basic and acidic residues; it reads PRKEQESPKMLRKEP. An SH3-binding 3 motif is present at residues 1039–1050; it reads PKMLRKEPPPCP. Residues 1141–1150 show a composition bias toward pro residues; that stretch reads IPAPRPPLPV. Basic and acidic residues predominate over residues 1162-1184; that stretch reads KGRDYRDNTELPHHGKHRQEEGL.

The protein belongs to the inositol 1,4,5-trisphosphate 5-phosphatase family. In terms of assembly, interacts with tyrosine phosphorylated form of SHC1. Interacts with tyrosine phosphorylated form of DOK1. Interacts with tyrosine phosphorylated form of DOK3. Interacts with tyrosine phosphorylated form of SLAMF1/CD150. Interacts with PTPN11/SHP-2 in response to IL-3. Interacts with receptor EPOR. Interacts with receptors MS4A2/FCER1B and FCER1G. Interacts with receptors FCGR2B and FCGR3. Interacts with receptor FCGR2A, leading to regulate gene expression during the phagocytic process. Interacts with GRB2. Interacts with PLCG1. Interacts with tyrosine kinases SRC and TEC. Interacts with CRKL. Interacts with c-Met/MET. Interacts with MILR1 (tyrosine-phosphorylated). Isoform 5 interacts with IL6ST/gp130. Can weakly interact (via NPXY motif 2) with DAB2 (via PID domain); the interaction is impaired by tyrosine phosphorylation of the NPXY motif. Interacts (via SH2 domain) with tyrosine phosphorylated KLRC1 (via ITIM). Interacts with MPL/TPOR. Tyrosine phosphorylated by the members of the SRC family after exposure to a diverse array of extracellular stimuli such as cytokines, growth factors, antibodies, chemokines, integrin ligands and hypertonic and oxidative stress. Phosphorylated upon IgG receptor FCGR2B-binding. In terms of tissue distribution, specifically expressed in immune and hematopoietic cells. Levels vary considerably within this compartment. Lost during erythropoiesis when erythroid cells become Ter119+. Increases substantially with T-cell maturation and when resting B-cells are activated. Also present in mature granulocytes, monocyte/macrophages, mast cells and platelets. Isoform 5 is the only form expressed in embryonic stem (ES) cells and is coexpressed with other isoforms in hematopoietic stem cells, and disappears with differentiation.

The protein localises to the cytoplasm. The protein resides in the cell membrane. It is found in the membrane raft. It localises to the cytoskeleton. The enzyme catalyses a 1,2-diacyl-sn-glycero-3-phospho-(1D-myo-inositol-3,4,5-trisphosphate) + H2O = a 1,2-diacyl-sn-glycero-3-phospho-(1D-myo-inositol-3,4-bisphosphate) + phosphate. It carries out the reaction a 1,2-diacyl-sn-glycero-3-phospho-(1D-myo-inositol-4,5-bisphosphate) + H2O = a 1,2-diacyl-sn-glycero-3-phospho-(1D-myo-inositol 4-phosphate) + phosphate. The catalysed reaction is 1D-myo-inositol 1,3,4,5-tetrakisphosphate + H2O = 1D-myo-inositol 1,3,4-trisphosphate + phosphate. With respect to regulation, activated upon translocation to the sites of synthesis of PtdIns(3,4,5)P3 in the membrane. In terms of biological role, phosphatidylinositol (PtdIns) phosphatase that specifically hydrolyzes the 5-phosphate of phosphatidylinositol-3,4,5-trisphosphate (PtdIns(3,4,5)P3) to produce PtdIns(3,4)P2, thereby negatively regulating the PI3K (phosphoinositide 3-kinase) pathways. Also able to hydrolyze the 5-phosphate of phosphatidylinositol-4,5-bisphosphate (PtdIns(4,5)P3) and inositol 1,3,4,5-tetrakisphosphate. Acts as a negative regulator of B-cell antigen receptor signaling. Mediates signaling from the FC-gamma-RIIB receptor (FCGR2B), playing a central role in terminating signal transduction from activating immune/hematopoietic cell receptor systems. Acts as a negative regulator of myeloid cell proliferation/survival and chemotaxis, mast cell degranulation, immune cells homeostasis, integrin alpha-IIb/beta-3 signaling in platelets and JNK signaling in B-cells. Regulates proliferation of osteoclast precursors, macrophage programming, phagocytosis and activation and is required for endotoxin tolerance. Involved in the control of cell-cell junctions, CD32a signaling in neutrophils and modulation of EGF-induced phospholipase C activity. Key regulator of neutrophil migration, by governing the formation of the leading edge and polarization required for chemotaxis. Modulates FCGR3/CD16-mediated cytotoxicity in NK cells. Mediates the activin/TGF-beta-induced apoptosis through its Smad-dependent expression. The polypeptide is Phosphatidylinositol 3,4,5-trisphosphate 5-phosphatase 1 (Inpp5d) (Mus musculus (Mouse)).